A 335-amino-acid polypeptide reads, in one-letter code: Putative serine/threonine-protein kinase 040L (335 aa).

In terms of domain architecture, Protein kinase spans 33 to 329; that stretch reads YYYQEFHDEG…DRLTELHHHL (297 aa). ATP is bound by residues 39–47 and Lys62; that span reads HDEGGYGSI. Asp196 functions as the Proton acceptor in the catalytic mechanism.

Belongs to the protein kinase superfamily. Ser/Thr protein kinase family.

In Invertebrate iridescent virus 3 (IIV-3), this protein is Putative serine/threonine-protein kinase 040L.